The primary structure comprises 206 residues: Nucleoside triphosphate pyrophosphatase (206 aa).

Residue aspartate 71 is the Proton acceptor of the active site.

This sequence belongs to the Maf family. A divalent metal cation is required as a cofactor.

It localises to the cytoplasm. It carries out the reaction a ribonucleoside 5'-triphosphate + H2O = a ribonucleoside 5'-phosphate + diphosphate + H(+). The enzyme catalyses a 2'-deoxyribonucleoside 5'-triphosphate + H2O = a 2'-deoxyribonucleoside 5'-phosphate + diphosphate + H(+). Nucleoside triphosphate pyrophosphatase. May have a dual role in cell division arrest and in preventing the incorporation of modified nucleotides into cellular nucleic acids. This Rippkaea orientalis (strain PCC 8801 / RF-1) (Cyanothece sp. (strain PCC 8801)) protein is Nucleoside triphosphate pyrophosphatase.